Reading from the N-terminus, the 92-residue chain is Large ribosomal subunit protein bL28 (92 aa).

Belongs to the bacterial ribosomal protein bL28 family.

This chain is Large ribosomal subunit protein bL28, found in Borreliella burgdorferi (strain ATCC 35210 / DSM 4680 / CIP 102532 / B31) (Borrelia burgdorferi).